A 377-amino-acid polypeptide reads, in one-letter code: tRNA-specific 2-thiouridylase MnmA (377 aa).

ATP-binding positions include Gly8–Ser15 and Met34. An interaction with target base in tRNA region spans residues Asn94–Asp96. The active-site Nucleophile is Cys99. Cys99 and Cys201 are joined by a disulfide. Position 123 (Gly123) interacts with ATP. The tract at residues Lys151 to Gln153 is interaction with tRNA. The Cysteine persulfide intermediate role is filled by Cys201. The segment at Arg315–Tyr316 is interaction with tRNA.

The protein belongs to the MnmA/TRMU family.

It is found in the cytoplasm. It catalyses the reaction S-sulfanyl-L-cysteinyl-[protein] + uridine(34) in tRNA + AH2 + ATP = 2-thiouridine(34) in tRNA + L-cysteinyl-[protein] + A + AMP + diphosphate + H(+). Catalyzes the 2-thiolation of uridine at the wobble position (U34) of tRNA, leading to the formation of s(2)U34. In Acinetobacter baumannii (strain AB307-0294), this protein is tRNA-specific 2-thiouridylase MnmA.